The primary structure comprises 481 residues: UDP-N-acetylmuramoyl-L-alanyl-D-glutamate--L-lysine ligase (481 aa).

Serine 42 is a binding site for UDP-N-acetyl-alpha-D-muramoyl-L-alanyl-D-glutamate. Residue 118–124 (GTKGKTT) coordinates ATP. Residues asparagine 158, 160–161 (TT), serine 187, and arginine 195 each bind UDP-N-acetyl-alpha-D-muramoyl-L-alanyl-D-glutamate. The residue at position 229 (lysine 229) is an N6-carboxylysine. The short motif at 404–407 (DDPN) is the L-lysine recognition motif element.

Belongs to the MurCDEF family. MurE subfamily. Carboxylation is probably crucial for Mg(2+) binding and, consequently, for the gamma-phosphate positioning of ATP.

It is found in the cytoplasm. The enzyme catalyses UDP-N-acetyl-alpha-D-muramoyl-L-alanyl-D-glutamate + L-lysine + ATP = UDP-N-acetyl-alpha-D-muramoyl-L-alanyl-gamma-D-glutamyl-L-lysine + ADP + phosphate + H(+). Its pathway is cell wall biogenesis; peptidoglycan biosynthesis. Its function is as follows. Catalyzes the addition of L-lysine to the nucleotide precursor UDP-N-acetylmuramoyl-L-alanyl-D-glutamate (UMAG) in the biosynthesis of bacterial cell-wall peptidoglycan. The sequence is that of UDP-N-acetylmuramoyl-L-alanyl-D-glutamate--L-lysine ligase from Streptococcus thermophilus (strain ATCC BAA-491 / LMD-9).